A 335-amino-acid chain; its full sequence is N-acetylmuramoyl-L-alanine amidase sle1 (335 aa).

The signal sequence occupies residues 1–25 (MQKKVIAAIIGTSAISAVAATQANA). The LysM 1 domain maps to 27–70 (TTHTVKPGESVWAISNKYGISIAKLKSLNNLTSNLIFPNQVLKV). Over residues 71 to 86 (SGSSNSTSNSSRPSTN) the composition is skewed to low complexity. Positions 71 to 90 (SGSSNSTSNSSRPSTNSGGG) are disordered. LysM domains follow at residues 91–134 (SYYT…KLKV) and 158–201 (SYYT…KLKV). The Peptidase C51 domain maps to 211-335 (ASATTTNRGY…YQVNNYRYIH (125 aa)).

The protein localises to the secreted. It localises to the cell surface. It catalyses the reaction Hydrolyzes the link between N-acetylmuramoyl residues and L-amino acid residues in certain cell-wall glycopeptides.. In terms of biological role, peptidoglycan hydrolase involved in the splitting of the septum during cell division. This is N-acetylmuramoyl-L-alanine amidase sle1 (sle1) from Staphylococcus aureus (strain bovine RF122 / ET3-1).